A 281-amino-acid chain; its full sequence is Lectin alpha chain (281 aa).

Asparagine 35, asparagine 82, and asparagine 140 each carry an N-linked (GlcNAc...) asparagine glycan.

This sequence belongs to the leguminous lectin family. As to quaternary structure, tetramer of 2 alpha and 2 beta chains. Glycosylated. Post-translationally, the beta chain is produced by partial proteolytic processing of the alpha chain.

Functionally, D-galactose-binding lectin. The chain is Lectin alpha chain from Lablab purpureus (Hyacinth bean).